Consider the following 137-residue polypeptide: 2-iminobutanoate/2-iminopropanoate deaminase (137 aa).

Ser2 is subject to N-acetylserine. N6-succinyllysine occurs at positions 13, 60, and 67. Thr74 carries the post-translational modification Phosphothreonine.

The protein belongs to the RutC family. Homotrimer. Interacts with YTHDF2. In terms of tissue distribution, liver and kidney.

It localises to the cytoplasm. The protein localises to the nucleus. Its subcellular location is the peroxisome. It is found in the mitochondrion. It catalyses the reaction 2-iminobutanoate + H2O = 2-oxobutanoate + NH4(+). It carries out the reaction 2-iminopropanoate + H2O = pyruvate + NH4(+). Catalyzes the hydrolytic deamination of enamine/imine intermediates that form during the course of normal metabolism. May facilitate the release of ammonia from these potentially toxic reactive metabolites, reducing their impact on cellular components. It may act on enamine/imine intermediates formed by several types of pyridoxal-5'-phosphate-dependent dehydratases including L-threonine dehydratase. Functionally, also promotes endoribonucleolytic cleavage of some transcripts by promoting recruitment of the ribonuclease P/MRP complex. Acts by bridging YTHDF2 and the ribonuclease P/MRP complex. RIDA/HRSP12 binds to N6-methyladenosine (m6A)-containing mRNAs containing a 5'-GGUUC-3' motif: cooperative binding of RIDA/HRSP12 and YTHDF2 to such transcripts lead to recruitment of the ribonuclease P/MRP complex and subsequent endoribonucleolytic cleavage. The chain is 2-iminobutanoate/2-iminopropanoate deaminase from Rattus norvegicus (Rat).